Reading from the N-terminus, the 449-residue chain is Trigger factor (449 aa).

In terms of domain architecture, PPIase FKBP-type spans 172–257 (GDEVRFDFKG…IKEITNVKPQ (86 aa)).

Belongs to the FKBP-type PPIase family. Tig subfamily.

It localises to the cytoplasm. The catalysed reaction is [protein]-peptidylproline (omega=180) = [protein]-peptidylproline (omega=0). In terms of biological role, involved in protein export. Acts as a chaperone by maintaining the newly synthesized protein in an open conformation. Functions as a peptidyl-prolyl cis-trans isomerase. This Ureaplasma parvum serovar 3 (strain ATCC 27815 / 27 / NCTC 11736) protein is Trigger factor.